Reading from the N-terminus, the 404-residue chain is Ubiquitin-like modifier-activating enzyme 5 (404 aa).

Positions 83, 104, 127, 150, and 184 each coordinate ATP. Zn(2+) contacts are provided by cysteine 226 and cysteine 229. Cysteine 250 functions as the Glycyl thioester intermediate in the catalytic mechanism. Residues cysteine 303 and cysteine 308 each contribute to the Zn(2+) site. The segment at 372–393 (APEKSSETSEETVTAATADETS) is disordered. Low complexity predominate over residues 382–391 (ETVTAATADE).

The protein belongs to the ubiquitin-activating E1 family. UBA5 subfamily.

Its function is as follows. E1-like enzyme which activates UFM1. The protein is Ubiquitin-like modifier-activating enzyme 5 of Drosophila sechellia (Fruit fly).